We begin with the raw amino-acid sequence, 522 residues long: BAR/IMD domain-containing adapter protein 2-like 2 (522 aa).

The 239-residue stretch at 1–239 (MAPEMDQFYR…HSPGLLGPAL (239 aa)) folds into the IMD domain. Disordered regions lie at residues 220–325 (SEAS…GGGG) and 404–502 (PMSP…GTNP). Residues Ser231, Ser272, and Ser303 each carry the phosphoserine modification. The span at 297-317 (RTPSASSLYASSTQRSRSNSF) shows a compositional bias: polar residues. One can recognise an SH3 domain in the interval 324-387 (GGARRVRALV…PEAYVKPVEE (64 aa)). The segment covering 443–456 (SQSRSRTPSRVPSR) has biased composition (low complexity). Positions 457 to 466 (APSPAPPPLP) are enriched in pro residues. Phosphoserine is present on residues Ser472 and Ser475.

As to expression, expressed in the epithelial layer of the intestine and in the kidney.

Its subcellular location is the cell membrane. The protein localises to the cell junction. It is found in the cytoplasmic vesicle membrane. Functionally, phosphoinositides-binding protein that induces the formation of planar or gently curved membrane structures. Binds to phosphoinositides, including to phosphatidylinositol 4,5-bisphosphate (PtdIns(4,5)P2) headgroups. There seems to be no clear preference for a specific phosphoinositide. The chain is BAR/IMD domain-containing adapter protein 2-like 2 (Baiap2l2) from Mus musculus (Mouse).